Reading from the N-terminus, the 279-residue chain is Protein FAM151B (279 aa).

The protein belongs to the menorin family.

Its function is as follows. Essential for survival of retinal photoreceptor cells. The polypeptide is Protein FAM151B (Fam151b) (Mus musculus (Mouse)).